The following is a 527-amino-acid chain: Glutamate--cysteine ligase (527 aa).

The protein belongs to the glutamate--cysteine ligase type 1 family. Type 1 subfamily.

The enzyme catalyses L-cysteine + L-glutamate + ATP = gamma-L-glutamyl-L-cysteine + ADP + phosphate + H(+). The protein operates within sulfur metabolism; glutathione biosynthesis; glutathione from L-cysteine and L-glutamate: step 1/2. In Pseudomonas paraeruginosa (strain DSM 24068 / PA7) (Pseudomonas aeruginosa (strain PA7)), this protein is Glutamate--cysteine ligase.